The sequence spans 500 residues: Lysine--tRNA ligase (500 aa).

Mg(2+) contacts are provided by glutamate 410 and glutamate 417.

The protein belongs to the class-II aminoacyl-tRNA synthetase family. As to quaternary structure, homodimer. Mg(2+) is required as a cofactor.

The protein resides in the cytoplasm. It catalyses the reaction tRNA(Lys) + L-lysine + ATP = L-lysyl-tRNA(Lys) + AMP + diphosphate. This chain is Lysine--tRNA ligase, found in Shewanella frigidimarina (strain NCIMB 400).